Reading from the N-terminus, the 106-residue chain is Cell division protein FtsB (106 aa).

Over 1-3 (MGK) the chain is Cytoplasmic. The helical transmembrane segment at 4 to 21 (LTLLLLVLLGWLQYSLWL) threads the bilayer. Over 22-106 (GKNGIHDYVR…SRPSTPNNTQ (85 aa)) the chain is Periplasmic. Residues 29-70 (YVRVKNDVAMQERNNSKLKARNDQLSAEIDDLTGGQEAIEER) adopt a coiled-coil conformation.

This sequence belongs to the FtsB family. Part of a complex composed of FtsB, FtsL and FtsQ.

It localises to the cell inner membrane. Its function is as follows. Essential cell division protein. May link together the upstream cell division proteins, which are predominantly cytoplasmic, with the downstream cell division proteins, which are predominantly periplasmic. The polypeptide is Cell division protein FtsB (Photorhabdus laumondii subsp. laumondii (strain DSM 15139 / CIP 105565 / TT01) (Photorhabdus luminescens subsp. laumondii)).